The primary structure comprises 248 residues: MRLIQNMCTIAEYPAPGSAAAADCCLGAAGRRLVKIAVVGASGVGKTALVVRFLTKRFIGDYERNAGNLYTRQVQIEGETLAIQVQDTPGIQVHENGLSCTEQLNRCIRWADAVVIVFSITDYKSYELTSQLHQHVQQLHLGTRLPVVVVANKADLLHIKQVDPQLGLQLASMLGCSFYEVSVSENDNDVYNAFHVLCKEVSHKQQPSGTPEKRRTSLIPRPKSPNMQDLKRRFKQALSAKVRTVTSV.

The interval 29–246 is small GTPase-like; that stretch reads AGRRLVKIAV…ALSAKVRTVT (218 aa). GTP contacts are provided by residues 40–47, 87–91, and 152–155; these read GASGVGKT, DTPGI, and NKAD. Residues 205 to 229 form a disordered region; the sequence is QQPSGTPEKRRTSLIPRPKSPNMQD.

The protein belongs to the small GTPase superfamily. Ras family.

The catalysed reaction is GTP + H2O = GDP + phosphate + H(+). The chain is Ras-like protein family member 11B from Bos taurus (Bovine).